A 105-amino-acid chain; its full sequence is Cuticle protein AMP1A (105 aa).

Positions 1-21 (DRDAQTLTDERSDQGDGNFRY) are disordered. The region spanning 16-81 (DGNFRYEFET…PSSDLLPVGP (66 aa)) is the Chitin-binding type R&amp;R domain.

In terms of tissue distribution, arthrodial membrane.

This is Cuticle protein AMP1A from Homarus americanus (American lobster).